The sequence spans 284 residues: Bifunctional protein FolD (284 aa).

NADP(+) is bound by residues 166-168 (GAS) and I232.

It belongs to the tetrahydrofolate dehydrogenase/cyclohydrolase family. As to quaternary structure, homodimer.

It catalyses the reaction (6R)-5,10-methylene-5,6,7,8-tetrahydrofolate + NADP(+) = (6R)-5,10-methenyltetrahydrofolate + NADPH. The catalysed reaction is (6R)-5,10-methenyltetrahydrofolate + H2O = (6R)-10-formyltetrahydrofolate + H(+). It participates in one-carbon metabolism; tetrahydrofolate interconversion. Its function is as follows. Catalyzes the oxidation of 5,10-methylenetetrahydrofolate to 5,10-methenyltetrahydrofolate and then the hydrolysis of 5,10-methenyltetrahydrofolate to 10-formyltetrahydrofolate. The sequence is that of Bifunctional protein FolD from Pseudomonas aeruginosa (strain LESB58).